The sequence spans 113 residues: Mediator of RNA polymerase II transcription subunit 22 (113 aa).

Belongs to the Mediator complex subunit 22 family. In terms of assembly, component of the Mediator complex.

Its subcellular location is the nucleus. In terms of biological role, component of the Mediator complex, a coactivator involved in the regulated transcription of nearly all RNA polymerase II-dependent genes. Mediator functions as a bridge to convey information from gene-specific regulatory proteins to the basal RNA polymerase II transcription machinery. Mediator is recruited to promoters by direct interactions with regulatory proteins and serves as a scaffold for the assembly of a functional preinitiation complex with RNA polymerase II and the general transcription factors. In Candida glabrata (strain ATCC 2001 / BCRC 20586 / JCM 3761 / NBRC 0622 / NRRL Y-65 / CBS 138) (Yeast), this protein is Mediator of RNA polymerase II transcription subunit 22 (SRB6).